A 151-amino-acid polypeptide reads, in one-letter code: UPF0756 membrane protein Moth_0120 (151 aa).

A run of 4 helical transmembrane segments spans residues 6-26 (VILI…IAAA), 52-72 (AGLI…RVAP), 75-95 (MLQS…IIAT), and 111-131 (MMIG…GIPV).

This sequence belongs to the UPF0756 family.

The protein resides in the cell membrane. The polypeptide is UPF0756 membrane protein Moth_0120 (Moorella thermoacetica (strain ATCC 39073 / JCM 9320)).